Reading from the N-terminus, the 184-residue chain is Large ribosomal subunit protein uL6 (184 aa).

This sequence belongs to the universal ribosomal protein uL6 family. In terms of assembly, part of the 50S ribosomal subunit.

Functionally, this protein binds to the 23S rRNA, and is important in its secondary structure. It is located near the subunit interface in the base of the L7/L12 stalk, and near the tRNA binding site of the peptidyltransferase center. This chain is Large ribosomal subunit protein uL6, found in Pseudothermotoga lettingae (strain ATCC BAA-301 / DSM 14385 / NBRC 107922 / TMO) (Thermotoga lettingae).